The chain runs to 351 residues: MTDLYRLLPEEMEKLVIDMGYDRYRADQILLPLYYKFPKDINDIPQLPKKLREEFTEAGYTIGSAKEIHRVVSDDGDTTKLLLELSDGSSVETVLMQYEPTKIGGHPRSTICVSTQIGCAMGCVFCATGQMGFETNLKAEHIVSQVIHFAELLEQRGEHVTNLVFMGMGEPMANYDEMIRAVKILTHDRGFGLGQRHITISTIGITSGIEKLAEENLQIGLAISLHAPNNELRKKLVPTAGPNSVEDIIKSGRDYFKKTGRRVTFEYALMEGVNDSPEIAHELARLLRGNGSHVNIIPINPTAGDFKRPSEKNVLEFEQILRKSGVNCTVRVEKGTEISAACGQLRTDIVG.

Glutamate 92 acts as the Proton acceptor in catalysis. The Radical SAM core domain occupies 105–337 (GHPRSTICVS…CTVRVEKGTE (233 aa)). The cysteines at positions 112 and 342 are disulfide-linked. Residues cysteine 119, cysteine 123, and cysteine 126 each contribute to the [4Fe-4S] cluster site. S-adenosyl-L-methionine-binding positions include 169–170 (GE), serine 201, 224–226 (SLH), and asparagine 300. Cysteine 342 acts as the S-methylcysteine intermediate in catalysis.

It belongs to the radical SAM superfamily. RlmN family. It depends on [4Fe-4S] cluster as a cofactor.

It is found in the cytoplasm. It catalyses the reaction adenosine(2503) in 23S rRNA + 2 reduced [2Fe-2S]-[ferredoxin] + 2 S-adenosyl-L-methionine = 2-methyladenosine(2503) in 23S rRNA + 5'-deoxyadenosine + L-methionine + 2 oxidized [2Fe-2S]-[ferredoxin] + S-adenosyl-L-homocysteine. In terms of biological role, specifically methylates position 2 of adenine 2503 in 23S rRNA. This is Ribosomal RNA large subunit methyltransferase N from Nitrosopumilus maritimus (strain SCM1).